The following is a 147-amino-acid chain: Large ribosomal subunit protein uL15 (147 aa).

Positions 1–42 (MTIKLHHLRPAPGSKSNKIRVGRGEGGKRGKTAGRGTKGTKA) are disordered.

It belongs to the universal ribosomal protein uL15 family. In terms of assembly, part of the 50S ribosomal subunit.

Functionally, binds to the 23S rRNA. The chain is Large ribosomal subunit protein uL15 from Rhodococcus erythropolis (strain PR4 / NBRC 100887).